We begin with the raw amino-acid sequence, 190 residues long: Large ribosomal subunit protein bL17 (190 aa).

A disordered region spans residues 128–190 (KKTAGRKAAQ…VEENNEQNKA (63 aa)). The span at 143 to 154 (ALAPAEETPAPT) shows a compositional bias: low complexity. The span at 179 to 190 (LAVEENNEQNKA) shows a compositional bias: acidic residues.

The protein belongs to the bacterial ribosomal protein bL17 family. Part of the 50S ribosomal subunit. Contacts protein L32.

The sequence is that of Large ribosomal subunit protein bL17 from Salinispora tropica (strain ATCC BAA-916 / DSM 44818 / JCM 13857 / NBRC 105044 / CNB-440).